Here is a 325-residue protein sequence, read N- to C-terminus: 8-oxo-dGDP phosphatase NUDT18 (325 aa).

The Nudix hydrolase domain maps to 38 to 163 (NVCYIVGAVI…DILSLIDAGL (126 aa)). Leu55 provides a ligand contact to Mg(2+). The Nudix box motif lies at 73-94 (GRMEECESILEALQREVREEAG).

This sequence belongs to the Nudix hydrolase family. Requires Mn(2+) as cofactor. Mg(2+) is required as a cofactor.

It catalyses the reaction 8-oxo-dGDP + H2O = 8-oxo-dGMP + phosphate + H(+). The enzyme catalyses 8-oxo-dADP + H2O = 8-oxo-dAMP + phosphate + H(+). The catalysed reaction is 2-oxo-dADP + H2O = 2-oxo-dAMP + phosphate + H(+). It carries out the reaction 8-oxo-GDP + H2O = 8-oxo-GMP + phosphate + H(+). Its function is as follows. Mediates the hydrolysis of oxidized nucleoside diphosphate derivatives. Hydrolyzes 8-oxo-7,8-dihydroguanine (8-oxo-Gua)-containing deoxyribo- and ribonucleoside diphosphates to the monophosphates. Hydrolyzes 8-oxo-dGDP and 8-oxo-GDP with the same efficiencies. Also hydrolyzes 8-OH-dADP and 2-OH-dADP. Exhibited no or minimal hydrolysis activity against 8-oxo-dGTP, 8-oxo-GTP, dGTP, GTP, dGDP and GDP. Probably removes oxidized guanine nucleotides from both the DNA and RNA precursor pools. This Danio rerio (Zebrafish) protein is 8-oxo-dGDP phosphatase NUDT18 (nudt18).